The chain runs to 126 residues: Large ribosomal subunit protein bL17c (126 aa).

The N-terminal 10 residues, Met1–Ala10, are a transit peptide targeting the chloroplast.

In terms of assembly, component of the chloroplast large ribosomal subunit (LSU). Mature 70S chloroplast ribosomes of higher plants consist of a small (30S) and a large (50S) subunit. The 30S small subunit contains 1 molecule of ribosomal RNA (16S rRNA) and 24 different proteins. The 50S large subunit contains 3 rRNA molecules (23S, 5S and 4.5S rRNA) and 33 different proteins.

It localises to the plastid. The protein localises to the chloroplast. Its function is as follows. Component of the chloroplast ribosome (chloro-ribosome), a dedicated translation machinery responsible for the synthesis of chloroplast genome-encoded proteins, including proteins of the transcription and translation machinery and components of the photosynthetic apparatus. The polypeptide is Large ribosomal subunit protein bL17c (RPL17) (Spinacia oleracea (Spinach)).